The sequence spans 352 residues: Probable RNA methyltransferase Mpe_A3613 (352 aa).

The active-site Proton acceptor is the Glu-88. One can recognise a Radical SAM core domain in the interval 91 to 317; sequence LLPRDGLCVS…TKLRRSAGQD (227 aa). Cys-98 and Cys-322 form a disulfide bridge. The [4Fe-4S] cluster site is built by Cys-105, Cys-109, and Cys-112. Residues 150–151, Ser-180, 203–205, and Asn-279 each bind S-adenosyl-L-methionine; these read GE and SLH. The active-site S-methylcysteine intermediate is the Cys-322.

It belongs to the radical SAM superfamily. RlmN family. It depends on [4Fe-4S] cluster as a cofactor.

It is found in the cytoplasm. This chain is Probable RNA methyltransferase Mpe_A3613, found in Methylibium petroleiphilum (strain ATCC BAA-1232 / LMG 22953 / PM1).